A 484-amino-acid chain; its full sequence is Ribosome biogenesis protein YTM1 (484 aa).

The interval 11–94 is ubiquitin-like (UBL) domain; the sequence is VKVLFTTTEQ…EKTVTLQYVR (84 aa). 7 WD repeats span residues 121–160, 166–204, 215–254, 289–329, 331–372, 378–418, and 448–484; these read SSAG…LATS, GPLC…DHFS, GHRS…APEA, VHSR…VVST, TTSN…AATS, GHIN…PAAG, and GEGV…IISS.

Belongs to the WD repeat WDR12/YTM1 family. Component of the NOP7 complex, composed of ERB1, NOP7 and YTM1. The complex is held together by ERB1, which interacts with NOP7 via its N-terminal domain and with YTM1 via a high-affinity interaction between the seven-bladed beta-propeller domains of the 2 proteins. The NOP7 complex associates with the 66S pre-ribosome. Interacts (via UBL domain) with MDN1 (via VWFA/MIDAS domain).

Its subcellular location is the nucleus. It localises to the nucleolus. The protein localises to the nucleoplasm. In terms of biological role, component of the NOP7 complex, which is required for maturation of the 25S and 5.8S ribosomal RNAs and formation of the 60S ribosome. The protein is Ribosome biogenesis protein YTM1 of Pyricularia oryzae (strain 70-15 / ATCC MYA-4617 / FGSC 8958) (Rice blast fungus).